Here is a 275-residue protein sequence, read N- to C-terminus: Sulfate transporter CysZ (275 aa).

The disordered stretch occupies residues 1–24 (MSSEKSSFPEKPPSFEKPSHSNTA). Residues 13-24 (PSFEKPSHSNTA) show a composition bias toward basic and acidic residues. Transmembrane regions (helical) follow at residues 49-69 (FVILPLLMNIVLMGGAFWWLF), 93-113 (LIWPLAVLSILLVFSYLFSTI), 169-189 (IVLLLLYFIPGIGQTVAPVLW), and 232-252 (ALVSLFTLVPFLNLVIMPVAV).

Belongs to the CysZ family.

It is found in the cell inner membrane. In terms of biological role, high affinity, high specificity proton-dependent sulfate transporter, which mediates sulfate uptake. Provides the sulfur source for the cysteine synthesis pathway. The sequence is that of Sulfate transporter CysZ from Pectobacterium atrosepticum (strain SCRI 1043 / ATCC BAA-672) (Erwinia carotovora subsp. atroseptica).